Consider the following 165-residue polypeptide: Ribosomal RNA large subunit methyltransferase H (165 aa).

An S-adenosyl-L-methionine-binding site is contributed by G109.

It belongs to the RNA methyltransferase RlmH family. As to quaternary structure, homodimer.

It localises to the cytoplasm. It carries out the reaction pseudouridine(1915) in 23S rRNA + S-adenosyl-L-methionine = N(3)-methylpseudouridine(1915) in 23S rRNA + S-adenosyl-L-homocysteine + H(+). Functionally, specifically methylates the pseudouridine at position 1915 (m3Psi1915) in 23S rRNA. This is Ribosomal RNA large subunit methyltransferase H from Methylorubrum populi (strain ATCC BAA-705 / NCIMB 13946 / BJ001) (Methylobacterium populi).